The chain runs to 92 residues: Large ribosomal subunit protein bL27 (92 aa).

A propeptide spanning residues 1–9 is cleaved from the precursor; sequence MLKLNLQFF. Residues 14–34 form a disordered region; it reads GVGSTKNGRDSQSKRLGAKRA.

It belongs to the bacterial ribosomal protein bL27 family. Post-translationally, the N-terminus is cleaved by ribosomal processing cysteine protease Prp.

This chain is Large ribosomal subunit protein bL27, found in Exiguobacterium sibiricum (strain DSM 17290 / CCUG 55495 / CIP 109462 / JCM 13490 / 255-15).